Consider the following 519-residue polypeptide: Xylose import ATP-binding protein XylG (519 aa).

ABC transporter domains are found at residues 6–245 (LTMR…VGRE) and 262–507 (LDVR…LKPA). 38–45 (GENGAGKS) is an ATP binding site.

It belongs to the ABC transporter superfamily. Xylose importer (TC 3.A.1.2.4) family. The complex is composed of two ATP-binding proteins (XylG), two transmembrane proteins (XylH) and a solute-binding protein (XylF).

Its subcellular location is the cell inner membrane. It carries out the reaction D-xylose(out) + ATP + H2O = D-xylose(in) + ADP + phosphate + H(+). Functionally, part of the ABC transporter complex XylFGH involved in xylose import. Responsible for energy coupling to the transport system. This is Xylose import ATP-binding protein XylG from Burkholderia cenocepacia (strain HI2424).